The sequence spans 288 residues: MASLKEIDSRIKSTSKMKQITKAMNMVSSSKLRRAEKNTKSFRPYMEKMQDAITAVAGSNSTSNHPMLKSRDIKRSGYLVITSDKGLAGAYSTNVLKSLVNDINSKHNDSSEYSLIVLGQQGVDFFKHRGYEIESSLVEVPDQPSFKSIQSIAKHAIDLFSEENIDELTIYYSHYVSVLENKPATKQVLPLSQEDSGQGHGQMSSYEFEPDKESILSVILPQYVESLIYGTILDAKASEHASRMTAMRNASDNATELIDDLSLEYNRARQAAITQQITEIVGGSSALE.

This sequence belongs to the ATPase gamma chain family. F-type ATPases have 2 components, CF(1) - the catalytic core - and CF(0) - the membrane proton channel. CF(1) has five subunits: alpha(3), beta(3), gamma(1), delta(1), epsilon(1). CF(0) has three main subunits: a, b and c.

Its subcellular location is the cell membrane. Functionally, produces ATP from ADP in the presence of a proton gradient across the membrane. The gamma chain is believed to be important in regulating ATPase activity and the flow of protons through the CF(0) complex. In Staphylococcus epidermidis (strain ATCC 35984 / DSM 28319 / BCRC 17069 / CCUG 31568 / BM 3577 / RP62A), this protein is ATP synthase gamma chain.